Consider the following 355-residue polypeptide: NAD-dependent protein deacylase sirtuin-6 (355 aa).

An N-acetylserine modification is found at serine 2. The residue at position 10 (serine 10) is a Phosphoserine. One can recognise a Deacetylase sirtuin-type domain in the interval 27–272; the sequence is PEELERKVWE…TRLMKHLGLE (246 aa). Lysine 33 carries the N6-acetyllysine modification. NAD(+)-binding residues include alanine 53, threonine 57, phenylalanine 64, arginine 65, tryptophan 71, glutamine 113, and histidine 133. Histidine 133 (proton acceptor) is an active-site residue. Zn(2+)-binding residues include cysteine 141, cysteine 144, and cysteine 166. Residue lysine 170 forms a Glycyl lysine isopeptide (Lys-Gly) (interchain with G-Cter in ubiquitin) linkage. A Zn(2+)-binding site is contributed by cysteine 177. Positions 214, 216, 240, 242, and 258 each coordinate NAD(+). The segment at 284–355 is disordered; it reads RALPPLPRPP…KRVKAEAVPS (72 aa). Over residues 287-296 the composition is skewed to pro residues; it reads PPLPRPPTPK. Phosphothreonine is present on threonine 294. Serine 303 and serine 330 each carry phosphoserine.

Belongs to the sirtuin family. Class IV subfamily. In terms of assembly, homodimer; binds to nucleosomes and DNA ends as a homodimer. Interacts with RELA; interferes with RELA binding to target DNA. Interacts with SMARCA5; promoting recruitment of SMARCA5/SNF2H to double-strand breaks (DSBs) sites. Interacts with the mTORC2 complex; preventing the ability of SIRT6 to deacetylate FOXO1. Interacts with the CLOCK-BMAL1 complex; recruited by the CLOCK-BMAL1 complex to regulate expression of clock-controlled genes. Interacts with CSNK2A2; preventing CSNK2A2 localization to the nucleus. Post-translationally, acetylated at Lys-33. Deacetylation at Lys-33 by SIRT1 promotes homomultimerization and binding to double-strand breaks (DSBs) sites. Phosphorylation at Ser-10 by MAPK8/JNK1 in response to oxidative stress stimulates the mono-ADP-ribosyltransferase activity on PARP1, leading to PARP1 recruitment to double-strand breaks (DSBs). In terms of processing, monoubiquitinated at Lys-170 by STUB1/CHIP, preventing its degradation by the proteasome. Post-translationally, sumoylated, leading to specifically decrease ability to deacetylate histone H3 at 'Lys-56' (H3K56ac).

Its subcellular location is the nucleus. It localises to the chromosome. The protein resides in the telomere. The protein localises to the endoplasmic reticulum. The enzyme catalyses N(6)-acetyl-L-lysyl-[protein] + NAD(+) + H2O = 2''-O-acetyl-ADP-D-ribose + nicotinamide + L-lysyl-[protein]. It catalyses the reaction N(6)-tetradecanoyl-L-lysyl-[protein] + NAD(+) + H2O = 2''-O-tetradecanoyl-ADP-D-ribose + nicotinamide + L-lysyl-[protein]. It carries out the reaction N(6)-hexadecanoyl-L-lysyl-[protein] + NAD(+) + H2O = 2''-O-hexadecanoyl-ADP-D-ribose + nicotinamide + L-lysyl-[protein]. The catalysed reaction is L-lysyl-[protein] + NAD(+) = N(6)-(ADP-D-ribosyl)-L-lysyl-[protein] + nicotinamide + H(+). The enzyme catalyses L-arginyl-[protein] + NAD(+) = N(omega)-(ADP-D-ribosyl)-L-arginyl-[protein] + nicotinamide + H(+). Compared to the defatty-acylase activity, the protein deacetylase activity is weak in vitro, and requires activation. The histone deacetylase activity is strongly activated upon binding to nucleosomes and chromatin in vivo. Two molecules of SIRT6 associate with the acidic patch of one nucleosome, while the C-terminal disordered region of SIRT6 associates with nucleosomal DNA, leading to efficient histone deacetylation. The protein-lysine deacetylase activity is also activated by long-chain free fatty-acids. Its function is as follows. NAD-dependent protein deacetylase, deacylase and mono-ADP-ribosyltransferase that plays an essential role in DNA damage repair, telomere maintenance, metabolic homeostasis, inflammation, tumorigenesis and aging. Displays protein-lysine deacetylase or defatty-acylase (demyristoylase and depalmitoylase) activity, depending on the context. Acts as a key histone deacetylase by catalyzing deacetylation of histone H3 at 'Lys-9', 'Lys-18' and 'Lys-56' (H3K9ac, H3K18ac and H3K56ac, respectively), suppressing target gene expression of several transcription factors, including NF-kappa-B. Acts as an inhibitor of transcription elongation by mediating deacetylation of H3K9ac and H3K56ac, preventing release of NELFE from chromatin and causing transcriptional pausing. Involved in DNA repair by promoting double-strand break (DSB) repair: acts as a DSB sensor by recognizing and binding DSB sites, leading to (1) recruitment of DNA repair proteins, such as SMARCA5/SNF2H, and (2) deacetylation of histone H3K9ac and H3K56ac. SIRT6 participation to DSB repair is probably involved in extension of life span. Also promotes DNA repair by deacetylating non-histone proteins, such as DDB2 and p53/TP53. Specifically deacetylates H3K18ac at pericentric heterochromatin, thereby maintaining pericentric heterochromatin silencing at centromeres and protecting against genomic instability and cellular senescence. Involved in telomere maintenance by catalyzing deacetylation of histone H3 in telomeric chromatin, regulating telomere position effect and telomere movement in response to DNA damage. Required for embryonic stem cell differentiation by mediating histone deacetylation of H3K9ac. Plays a major role in metabolism by regulating processes such as glycolysis, gluconeogenesis, insulin secretion and lipid metabolism. Inhibits glycolysis via histone deacetylase activity and by acting as a corepressor of the transcription factor HIF1A, thereby controlling the expression of multiple glycolytic genes. Has tumor suppressor activity by repressing glycolysis, thereby inhibiting the Warburg effect. Also regulates glycolysis and tumorigenesis by mediating deacetylation and nuclear export of non-histone proteins, such as isoform M2 of PKM (PKM2). Acts as a negative regulator of gluconeogenesis by mediating deacetylation of non-histone proteins, such as FOXO1 and KAT2A/GCN5. Promotes beta-oxidation of fatty acids during fasting by catalyzing deacetylation of NCOA2, inducing coactivation of PPARA. Acts as a regulator of lipid catabolism in brown adipocytes, both by catalyzing deacetylation of histones and non-histone proteins, such as FOXO1. Also acts as a regulator of circadian rhythms, both by regulating expression of clock-controlled genes involved in lipid and carbohydrate metabolism, and by catalyzing deacetylation of PER2. The defatty-acylase activity is specifically involved in regulation of protein secretion. Has high activity toward long-chain fatty acyl groups and mediates protein-lysine demyristoylation and depalmitoylation of target proteins, such as RRAS2 and TNF, thereby regulating their secretion. Also acts as a mono-ADP-ribosyltransferase by mediating mono-ADP-ribosylation of PARP1, TRIM28/KAP1 or SMARCC2/BAF170. Mono-ADP-ribosyltransferase activity is involved in DNA repair, cellular senescence, repression of LINE-1 retrotransposon elements and regulation of transcription. This chain is NAD-dependent protein deacylase sirtuin-6, found in Macaca fascicularis (Crab-eating macaque).